The primary structure comprises 511 residues: U3 snoRNP-associated protein-like YAOH (511 aa).

The span at 1 to 18 (MAPRPRKRVSRPKPRATS) shows a compositional bias: basic residues. Residues 1–117 (MAPRPRKRVS…EDEDEGEEAG (117 aa)) form a disordered region. Acidic residues-rich tracts occupy residues 44-53 (EDIESEDSDL) and 66-80 (DDGE…EQET). The span at 81–105 (AGEKKMRIAKELLKKVTDAARRRRE) shows a compositional bias: basic and acidic residues. WD repeat units follow at residues 158 to 197 (KHRQ…SEKY), 217 to 256 (KRSK…HIQA), 259 to 298 (GHRG…YMNC), 301 to 339 (GHQN…QLLF), 342 to 380 (PATA…PTHI), 412 to 451 (SAQS…KGIR), and 457 to 497 (RLDG…QNGV).

It belongs to the WD repeat RRP9 family.

It localises to the nucleus. It is found in the nucleolus. Functionally, component of a nucleolar small nuclear ribonucleoprotein particle (snoRNP) thought to participate in the processing and modification of pre-ribosomal RNA. Essential for embryogenesis. In Oryza sativa subsp. japonica (Rice), this protein is U3 snoRNP-associated protein-like YAOH.